We begin with the raw amino-acid sequence, 184 residues long: Photosystem I assembly protein Ycf4 (184 aa).

Transmembrane regions (helical) follow at residues 24–44 and 57–77; these read WAFI…SSYI and IIFF…LFIS.

This sequence belongs to the Ycf4 family.

The protein localises to the plastid. It is found in the chloroplast thylakoid membrane. Its function is as follows. Seems to be required for the assembly of the photosystem I complex. This Buxus microphylla (Littleleaf boxwood) protein is Photosystem I assembly protein Ycf4.